The following is a 144-amino-acid chain: MIQMQTNLDVADNSGARRVMCIKVLGGSKRKYAHVGDIIVVSVKEAIPRGRVKKGDVMKAVVVRTAKDIRRVDGSVIRFDRNAAVLINNKRAQSWDQTIALSIARRNEGYTHSQHSNQREGGERIQAQPSPPHARRAVKTSFCR.

A disordered region spans residues 107 to 144 (NEGYTHSQHSNQREGGERIQAQPSPPHARRAVKTSFCR).

It belongs to the universal ribosomal protein uL14 family. Part of the 50S ribosomal subunit. Forms a cluster with proteins L3 and L19. In the 70S ribosome, L14 and L19 interact and together make contacts with the 16S rRNA in bridges B5 and B8.

Its function is as follows. Binds to 23S rRNA. Forms part of two intersubunit bridges in the 70S ribosome. This Xanthobacter autotrophicus (strain ATCC BAA-1158 / Py2) protein is Large ribosomal subunit protein uL14.